The primary structure comprises 493 residues: UDP-N-acetylmuramate--L-alanine ligase (493 aa).

Position 126–132 (126–132) interacts with ATP; it reads GTHGKTT.

It belongs to the MurCDEF family.

It is found in the cytoplasm. The catalysed reaction is UDP-N-acetyl-alpha-D-muramate + L-alanine + ATP = UDP-N-acetyl-alpha-D-muramoyl-L-alanine + ADP + phosphate + H(+). The protein operates within cell wall biogenesis; peptidoglycan biosynthesis. Cell wall formation. The protein is UDP-N-acetylmuramate--L-alanine ligase of Hamiltonella defensa subsp. Acyrthosiphon pisum (strain 5AT).